The primary structure comprises 304 residues: Nod factor export ATP-binding protein I (304 aa).

Residues 6-236 (IDFQQVEKRY…EIGCDVIEIY (231 aa)) enclose the ABC transporter domain. Position 38 to 45 (38 to 45 (GPNGAGKT)) interacts with ATP.

Belongs to the ABC transporter superfamily. Lipooligosaccharide exporter (TC 3.A.1.102) family. As to quaternary structure, the complex is composed of two ATP-binding proteins (NodI) and two transmembrane proteins (NodJ).

Its subcellular location is the cell inner membrane. Part of the ABC transporter complex NodIJ involved in the export of the nodulation factors (Nod factors), the bacterial signal molecules that induce symbiosis and subsequent nodulation induction. Nod factors are LCO (lipo-chitin oligosaccharide), a modified beta-1,4-linked N-acetylglucosamine oligosaccharide. This subunit is responsible for energy coupling to the transport system. This chain is Nod factor export ATP-binding protein I, found in Burkholderia pseudomallei (strain K96243).